Reading from the N-terminus, the 253-residue chain is Phosphate import ATP-binding protein PstB 1 (253 aa).

The ABC transporter domain occupies 7–248 (LQIRDLSVYY…PKRKETEDYI (242 aa)). Residue 39-46 (GPSGSGKS) participates in ATP binding.

Belongs to the ABC transporter superfamily. Phosphate importer (TC 3.A.1.7) family. The complex is composed of two ATP-binding proteins (PstB), two transmembrane proteins (PstC and PstA) and a solute-binding protein (PstS).

The protein localises to the cell membrane. It carries out the reaction phosphate(out) + ATP + H2O = ADP + 2 phosphate(in) + H(+). Its function is as follows. Part of the ABC transporter complex PstSACB involved in phosphate import. Responsible for energy coupling to the transport system. This is Phosphate import ATP-binding protein PstB 1 from Streptococcus pyogenes serotype M2 (strain MGAS10270).